Here is a 220-residue protein sequence, read N- to C-terminus: Aspartic protease inhibitor 8 (220 aa).

A signal peptide spans 1 to 23; it reads MMKCLFLLCLCLLPIVVFSSTFT. A propeptide spanning residues 24–32 is cleaved from the precursor; the sequence is SQNLIDLPS. Intrachain disulfides connect cysteine 80–cysteine 125 and cysteine 174–cysteine 185.

The protein belongs to the protease inhibitor I3 (leguminous Kunitz-type inhibitor) family.

The protein resides in the vacuole. In terms of biological role, inhibitor of cathepsin D (aspartic protease) and trypsin (serine protease). May protect the plant by inhibiting proteases of invading organisms. This is Aspartic protease inhibitor 8 from Solanum tuberosum (Potato).